The primary structure comprises 278 residues: Probable F-box protein At1g14315 (278 aa).

Residues 1 to 43 form the F-box domain; the sequence is MQLLPHDTVEDILERVPVKSLLRFKSACKQWKLTIESQYFQAK.

The protein is Probable F-box protein At1g14315 of Arabidopsis thaliana (Mouse-ear cress).